Reading from the N-terminus, the 270-residue chain is Bis(5'-nucleosyl)-tetraphosphatase, symmetrical (270 aa).

It belongs to the Ap4A hydrolase family.

It catalyses the reaction P(1),P(4)-bis(5'-adenosyl) tetraphosphate + H2O = 2 ADP + 2 H(+). In terms of biological role, hydrolyzes diadenosine 5',5'''-P1,P4-tetraphosphate to yield ADP. The protein is Bis(5'-nucleosyl)-tetraphosphatase, symmetrical of Actinobacillus pleuropneumoniae serotype 5b (strain L20).